We begin with the raw amino-acid sequence, 809 residues long: Leucine--tRNA ligase (809 aa).

A 'HIGH' region motif is present at residues 40–50; the sequence is PYPSGRIHMGH. The 'KMSKS' region signature appears at 579 to 583; sequence KMSKS. Residue lysine 582 participates in ATP binding.

Belongs to the class-I aminoacyl-tRNA synthetase family.

It is found in the cytoplasm. It catalyses the reaction tRNA(Leu) + L-leucine + ATP = L-leucyl-tRNA(Leu) + AMP + diphosphate. In Campylobacter jejuni (strain RM1221), this protein is Leucine--tRNA ligase.